A 134-amino-acid chain; its full sequence is Holo-[acyl-carrier-protein] synthase (134 aa).

The Mg(2+) site is built by aspartate 8 and glutamate 57.

The protein belongs to the P-Pant transferase superfamily. AcpS family. Mg(2+) is required as a cofactor.

It is found in the cytoplasm. The enzyme catalyses apo-[ACP] + CoA = holo-[ACP] + adenosine 3',5'-bisphosphate + H(+). Transfers the 4'-phosphopantetheine moiety from coenzyme A to a Ser of acyl-carrier-protein. This is Holo-[acyl-carrier-protein] synthase from Agrobacterium fabrum (strain C58 / ATCC 33970) (Agrobacterium tumefaciens (strain C58)).